We begin with the raw amino-acid sequence, 123 residues long: Ribonuclease P protein component 1 (123 aa).

A disordered region spans residues 73–93 (PDNGVGTAFKPAGGETRQTTG).

It belongs to the eukaryotic/archaeal RNase P protein component 1 family. Consists of a catalytic RNA component and at least 4-5 protein subunits.

Its subcellular location is the cytoplasm. The catalysed reaction is Endonucleolytic cleavage of RNA, removing 5'-extranucleotides from tRNA precursor.. In terms of biological role, part of ribonuclease P, a protein complex that generates mature tRNA molecules by cleaving their 5'-ends. In Halobacterium salinarum (strain ATCC 29341 / DSM 671 / R1), this protein is Ribonuclease P protein component 1.